Consider the following 214-residue polypeptide: Cutinase CUT2 (214 aa).

The N-terminal stretch at 1 to 18 is a signal peptide; it reads MQFSLSIATAILAATASA. A disulfide bridge links C40 with C117. Residue S128 is the Nucleophile of the active site. Cysteines 179 and 186 form a disulfide. The active site involves D183. Catalysis depends on H196, which acts as the Proton donor/acceptor.

The protein belongs to the cutinase family. Post-translationally, the 2 disulfide bonds play a critical role in holding the catalytic residues in juxta-position; reduction of the disulfide bridges results in the complete inactivation of the enzyme.

The protein resides in the secreted. It catalyses the reaction cutin + H2O = cutin monomers.. In terms of biological role, catalyzes the hydrolysis of complex carboxylic polyesters found in the cell wall of plants. Degrades cutin, a macromolecule that forms the structure of the plant cuticle. Required for efficient penetration of the host plant cuticle by the appressorium during the initial stage of fungal infection. This Pyricularia oryzae (strain 70-15 / ATCC MYA-4617 / FGSC 8958) (Rice blast fungus) protein is Cutinase CUT2.